Reading from the N-terminus, the 153-residue chain is Transcriptional repressor NrdR (153 aa).

A zinc finger lies at C3 to C34. Residues V49 to D139 form the ATP-cone domain.

Belongs to the NrdR family. It depends on Zn(2+) as a cofactor.

Its function is as follows. Negatively regulates transcription of bacterial ribonucleotide reductase nrd genes and operons by binding to NrdR-boxes. The sequence is that of Transcriptional repressor NrdR from Erythrobacter litoralis (strain HTCC2594).